A 276-amino-acid chain; its full sequence is Ribosomal RNA small subunit methyltransferase A (276 aa).

Positions 27, 29, 54, 75, 101, and 122 each coordinate S-adenosyl-L-methionine.

It belongs to the class I-like SAM-binding methyltransferase superfamily. rRNA adenine N(6)-methyltransferase family. RsmA subfamily.

It localises to the cytoplasm. The catalysed reaction is adenosine(1518)/adenosine(1519) in 16S rRNA + 4 S-adenosyl-L-methionine = N(6)-dimethyladenosine(1518)/N(6)-dimethyladenosine(1519) in 16S rRNA + 4 S-adenosyl-L-homocysteine + 4 H(+). Functionally, specifically dimethylates two adjacent adenosines (A1518 and A1519) in the loop of a conserved hairpin near the 3'-end of 16S rRNA in the 30S particle. May play a critical role in biogenesis of 30S subunits. In Brucella melitensis biotype 1 (strain ATCC 23456 / CCUG 17765 / NCTC 10094 / 16M), this protein is Ribosomal RNA small subunit methyltransferase A.